The sequence spans 199 residues: Ribosome maturation factor RimM (199 aa).

The 74-residue stretch at 95-168 (EDEFYHADLV…FVRVDPVAAG (74 aa)) folds into the PRC barrel domain. Residues 167–199 (AGLVEDEDGDAPREEDFDPKGRPRGPRDAGGNR) form a disordered region. Residues 176-193 (DAPREEDFDPKGRPRGPR) are compositionally biased toward basic and acidic residues.

Belongs to the RimM family. In terms of assembly, binds ribosomal protein uS19.

It is found in the cytoplasm. Functionally, an accessory protein needed during the final step in the assembly of 30S ribosomal subunit, possibly for assembly of the head region. Essential for efficient processing of 16S rRNA. May be needed both before and after RbfA during the maturation of 16S rRNA. It has affinity for free ribosomal 30S subunits but not for 70S ribosomes. The protein is Ribosome maturation factor RimM of Mesorhizobium japonicum (strain LMG 29417 / CECT 9101 / MAFF 303099) (Mesorhizobium loti (strain MAFF 303099)).